We begin with the raw amino-acid sequence, 557 residues long: Resveratrol cleavage oxygenase 1 (557 aa).

Positions 1–46 (MAILNDPPSSTTILSLHTPDVPPPSKPTPATTSHPQDSRNPRNLTS) are disordered. Piceatannol contacts are provided by Tyr144 and Lys177. 2 residues coordinate trans-resveratrol: Tyr144 and Lys177. His211, His262, and His334 together coordinate Fe cation. Glu404 is a binding site for piceatannol. Glu404 contacts trans-resveratrol. Residue His523 coordinates Fe cation.

Belongs to the carotenoid oxygenase family. Fe(2+) serves as cofactor.

It carries out the reaction trans-resveratrol + O2 = 3,5-dihydroxybenzaldehyde + 4-hydroxybenzaldehyde. The catalysed reaction is piceatannol + O2 = 3,5-dihydroxybenzaldehyde + 3,4-dihydroxybenzaldehyde. Dioxygenase that cleaves the interphenyl C-alpha-C-beta double bond of resveratrol to yield 3,5-dihydroxybenzaldehyde and 4-hydroxybenzaldehyde. Also cleaves piceatannol, a compound that differs from resveratrol only in the occurrence of an additional hydroxyl group, which leads to the production of 3,4-dihydroxybenzaldehyde and 3,5-hydroxybenzaldehyde. This Botryotinia fuckeliana (strain B05.10) (Noble rot fungus) protein is Resveratrol cleavage oxygenase 1.